The sequence spans 206 residues: Superoxide dismutase [Mn] (206 aa).

H30, H78, D166, and H170 together coordinate Mn(2+).

Belongs to the iron/manganese superoxide dismutase family. As to quaternary structure, homodimer. Requires Mn(2+) as cofactor.

It catalyses the reaction 2 superoxide + 2 H(+) = H2O2 + O2. In terms of biological role, destroys superoxide anion radicals which are normally produced within the cells and which are toxic to biological systems. This chain is Superoxide dismutase [Mn] (sodA), found in Chlamydia trachomatis serovar D (strain ATCC VR-885 / DSM 19411 / UW-3/Cx).